Consider the following 122-residue polypeptide: Small ribosomal subunit protein uS10y (122 aa).

The protein belongs to the universal ribosomal protein uS10 family.

The sequence is that of Small ribosomal subunit protein uS10y (RPS20B) from Arabidopsis thaliana (Mouse-ear cress).